A 269-amino-acid chain; its full sequence is Formamidopyrimidine-DNA glycosylase (269 aa).

Proline 2 (schiff-base intermediate with DNA) is an active-site residue. Glutamate 3 serves as the catalytic Proton donor. Lysine 57 acts as the Proton donor; for beta-elimination activity in catalysis. Residues histidine 90, arginine 109, and arginine 150 each contribute to the DNA site. The segment at 235–269 (NVYGRKGEPCEACGKAIESKVIGQRNTFFCTRCQR) adopts an FPG-type zinc-finger fold. Residue arginine 259 is the Proton donor; for delta-elimination activity of the active site.

The protein belongs to the FPG family. In terms of assembly, monomer. Zn(2+) serves as cofactor.

It carries out the reaction Hydrolysis of DNA containing ring-opened 7-methylguanine residues, releasing 2,6-diamino-4-hydroxy-5-(N-methyl)formamidopyrimidine.. It catalyses the reaction 2'-deoxyribonucleotide-(2'-deoxyribose 5'-phosphate)-2'-deoxyribonucleotide-DNA = a 3'-end 2'-deoxyribonucleotide-(2,3-dehydro-2,3-deoxyribose 5'-phosphate)-DNA + a 5'-end 5'-phospho-2'-deoxyribonucleoside-DNA + H(+). Functionally, involved in base excision repair of DNA damaged by oxidation or by mutagenic agents. Acts as a DNA glycosylase that recognizes and removes damaged bases. Has a preference for oxidized purines, such as 7,8-dihydro-8-oxoguanine (8-oxoG). Has AP (apurinic/apyrimidinic) lyase activity and introduces nicks in the DNA strand. Cleaves the DNA backbone by beta-delta elimination to generate a single-strand break at the site of the removed base with both 3'- and 5'-phosphates. In Alteromonas mediterranea (strain DSM 17117 / CIP 110805 / LMG 28347 / Deep ecotype), this protein is Formamidopyrimidine-DNA glycosylase.